A 565-amino-acid chain; its full sequence is Berberine bridge enzyme-like C-2 (565 aa).

A signal peptide spans 1–17 (MFPIIILISFSFTFLFA). 2 N-linked (GlcNAc...) asparagine glycosylation sites follow: Asn28 and Asn40. Cys32 and Cys94 are disulfide-bonded. In terms of domain architecture, FAD-binding PCMH-type spans 72 to 248 (YMPKPTVIIL…YAWKIRLLKV (177 aa)). His109 carries the pros-8alpha-FAD histidine modification. N-linked (GlcNAc...) asparagine glycans are attached at residues Asn363 and Asn502.

The protein belongs to the oxygen-dependent FAD-linked oxidoreductase family. FAD serves as cofactor.

Its subcellular location is the vacuole. Its pathway is alkaloid biosynthesis; nicotine biosynthesis. In terms of biological role, involved in the biosynthesis of pyridine alkaloid natural products, leading mainly to the production of anabasine, anatabine, nicotine and nornicotine, effective deterrents against herbivores with antiparasitic and pesticide properties (neurotoxins); nornicotine serves as the precursor in the synthesis of the carcinogen compound N'-nitrosonornicotine (NNN). Catalyzes a late oxidation step subsequent to the pyridine ring condensation reaction in the biosynthesis of alkaloids. The sequence is that of Berberine bridge enzyme-like C-2 from Nicotiana tabacum (Common tobacco).